The primary structure comprises 398 residues: uncharacterized protein (398 aa).

Residues 313 to 398 are disordered; the sequence is KTIKSSGSKT…TSKSIKYYEV (86 aa). Composition is skewed to low complexity over residues 314 to 333 and 343 to 398; these read TIKS…TNKS and GSKT…YYEV.

This is an uncharacterized protein from Acanthamoeba polyphaga mimivirus (APMV).